The following is a 957-amino-acid chain: Valine--tRNA ligase (957 aa).

The short motif at Pro45–His55 is the 'HIGH' region element. The 'KMSKS' region signature appears at Lys571–Ser575. Residue Lys574 coordinates ATP. Residues Val887–Ile946 adopt a coiled-coil conformation.

This sequence belongs to the class-I aminoacyl-tRNA synthetase family. ValS type 1 subfamily. Monomer.

The protein resides in the cytoplasm. It catalyses the reaction tRNA(Val) + L-valine + ATP = L-valyl-tRNA(Val) + AMP + diphosphate. Functionally, catalyzes the attachment of valine to tRNA(Val). As ValRS can inadvertently accommodate and process structurally similar amino acids such as threonine, to avoid such errors, it has a 'posttransfer' editing activity that hydrolyzes mischarged Thr-tRNA(Val) in a tRNA-dependent manner. The protein is Valine--tRNA ligase of Rhodopseudomonas palustris (strain ATCC BAA-98 / CGA009).